The sequence spans 258 residues: 3-deoxy-manno-octulosonate cytidylyltransferase (258 aa).

Belongs to the KdsB family.

The protein localises to the cytoplasm. It catalyses the reaction 3-deoxy-alpha-D-manno-oct-2-ulosonate + CTP = CMP-3-deoxy-beta-D-manno-octulosonate + diphosphate. The protein operates within nucleotide-sugar biosynthesis; CMP-3-deoxy-D-manno-octulosonate biosynthesis; CMP-3-deoxy-D-manno-octulosonate from 3-deoxy-D-manno-octulosonate and CTP: step 1/1. It participates in bacterial outer membrane biogenesis; lipopolysaccharide biosynthesis. Functionally, activates KDO (a required 8-carbon sugar) for incorporation into bacterial lipopolysaccharide in Gram-negative bacteria. The sequence is that of 3-deoxy-manno-octulosonate cytidylyltransferase from Gemmatimonas aurantiaca (strain DSM 14586 / JCM 11422 / NBRC 100505 / T-27).